Reading from the N-terminus, the 253-residue chain is HTH-type transcriptional regulator YdeO (253 aa).

Positions 137-233 constitute an HTH araC/xylS-type domain; it reads GKVRNIVNMK…GNSPKRVSKE (97 aa). 2 consecutive DNA-binding regions (H-T-H motif) follow at residues 154-175 and 200-223; these read KDIC…KQEQ and VNKI…RKHF.

Induces the expression of gadE and mdtEF. Could also regulate the expression of other genes involved in acid resistance. This is HTH-type transcriptional regulator YdeO (ydeO) from Escherichia coli (strain K12).